The sequence spans 4062 residues: Transcription-associated protein 1 (4062 aa).

The interval 531–562 (LASEPSTSEDADESGGDPNKLPPPTKEGKKTS) is disordered. TPR repeat units follow at residues 1346 to 1379 (LDGVQNYMFNCPDGFDFEKDMDMYKRYLSHLLDI) and 1677 to 1714 (RRSFIRRIIVYQSSGPLRQEFMDTPEYFEKLIDLDDEE). Residues 2659 to 2670 (VETEMKREEPEP) show a composition bias toward basic and acidic residues. Positions 2659–2692 (VETEMKREEPEPMEVDEKDSQDDSKDAGEPKEKE) are disordered. Residues 2671 to 2680 (MEVDEKDSQD) are compositionally biased toward acidic residues. Over residues 2681–2692 (DSKDAGEPKEKE) the composition is skewed to basic and acidic residues. The FAT domain occupies 2800–3411 (LIEFISSKHE…FYHIREAVSV (612 aa)). Residues 2847 to 2880 (IETLESLGTLYNEISEFDQFAAIWERRAVFPDTM) form a TPR 3 repeat. Residues 3682 to 4046 (EPNFEIVIKG…DCVSLISRAK (365 aa)) form the PI3K/PI4K catalytic domain. Residues 3688-3694 (VIKGGQV) are G-loop. The catalytic loop stretch occupies residues 3902–3910 (NLTPMGPDQ). The segment at 3922–3950 (NPSYRFEIRGGRSLHDIQHFGHEVPFRLT) is activation loop. The region spanning 4031–4062 (AKLRKDDCVSLISRAKDSDNLARMPPTYHAWF) is the FATC domain.

The protein belongs to the PI3/PI4-kinase family. TRA1 subfamily. As to quaternary structure, interacts with histone acetyltransferase Tip60 homolog mys-1. Probably a component of a complex with histone acetyltransferase (HAT) activity, at least composed of mys-1 and trr-1. Expressed in germ cells and somatic cells.

It localises to the nucleus. Its subcellular location is the chromosome. Functionally, influences germ cell fate in hermaphrodites. Acts downstream of tra-2 and tra-3 and through the Tip60 histone acetyltransferase complex to regulate germ cell fate decisions. Required for spermatogenesis and embryonic development. Acts with tra-2 to promote expression of fog-3 and control male tail development. Involved in the negative regulation of vulval development. Involved in the positive regulation of transcription factor daf-16, probably acting by histone acetylation; thereby modulating stress resistance. Plays a role in acetylation of nucleosomal histone H4, probably acting as a component of the Tip60 histone acetyltransferase complex. In Caenorhabditis elegans, this protein is Transcription-associated protein 1.